The sequence spans 419 residues: MAPK/MAK/MRK overlapping kinase (419 aa).

The 282-residue stretch at 4–285 (YKAIGKIGEG…AHQALQHPYF (282 aa)) folds into the Protein kinase domain. ATP-binding positions include 10–18 (IGEGTFSEV) and Lys33. The active-site Proton acceptor is the Asp128. Disordered regions lie at residues 285–344 (FQEQ…RGPA) and 390–419 (PASK…KGGR). Composition is skewed to basic and acidic residues over residues 322-338 (KEGR…EDRP) and 393-402 (KKTDPQKDLK).

This sequence belongs to the protein kinase superfamily. CMGC Ser/Thr protein kinase family. CDC2/CDKX subfamily. Mg(2+) is required as a cofactor. Autophosphorylated. As to expression, expressed in heart, brain, lung, kidney, and pancreas, and at very low levels in placenta, liver and skeletal muscle. Detected in retina.

The protein localises to the cytoplasm. The protein resides in the cell projection. It is found in the cilium. Its subcellular location is the nucleus. It carries out the reaction L-seryl-[protein] + ATP = O-phospho-L-seryl-[protein] + ADP + H(+). The catalysed reaction is L-threonyl-[protein] + ATP = O-phospho-L-threonyl-[protein] + ADP + H(+). Its activity is regulated as follows. Phosphorylation appears to increase the enzymatic activity. Functionally, able to phosphorylate several exogenous substrates and to undergo autophosphorylation. Negatively regulates cilium length in a cAMP and mTORC1 signaling-dependent manner. This is MAPK/MAK/MRK overlapping kinase (MOK) from Homo sapiens (Human).